The following is a 1325-amino-acid chain: MGVSFKISKVGRKFRPKISTELATPDSPKAIVLSGKPKATDDSNIGDVSGFSKPSLPDISPDHEVSFILSLYPNGYSIGKTSEAMQQISFRDVPKVLHPYDRAAEGLLSAIEAGRLPGDILEDIPCKFVDGVVICEVHDYRKHTSSQVSPVINKLRLKMSLENVVKDIPSMSDNSWTYGDLMEVESRILKALQPELCLDPLPRLDRLSKNPLTAKLDLSLSTLRRKRLRQMAEVTVMSQNKIQGKKVCIDRLPESSERGNLPGHLIMQQTNNNQAIQNLGTNMLAGLRSQPLQDAPNSSLALVPPQQQRYMGIGSTRNTQDQGSNSVSVSGASPGGLDAMLPYGSDSMNPGTSFHRKRESQEGQMSSMPGLNKRTRVSHMGPDGVPQQQLGQRMDGLHGSDTNWKNTLLQHQDMLGRSIQYPNTSIQRFSPHQMEGVMNQEGGPMQFPASQQGGMKYTSKEEPFETGKIDGGTRNNIPGVGSDANDLDPRIQSRMPHNAFIRSNFPQTSWNVNPGQQIEKEPKKEEQFSRRISAQSPRLSAGGPPQSPLSSKSGEFSGGSMGTHYGAVAAAQKDKAVTSIPAIGATQSVGSSANEAMQQRQHQAQMAAKRRTNSLPKTQVISTVGSPVSVNTISVPVNARSPSVGPQTLGDHAILDRFSKIERVAARYQLNCKKHKVDEYSRRPRVYAKQPLTVCLSNLSNEEVFKDEDEALSKSIFGGSMNTYKTRVIHFGQMERVMQGSVPSFIPRNRTRLVMSEKAVDGTVAWYQGDVDEGDVFQAEDFLLALPNTHIADLLATQFKSLMAREGYMIEEHIMAKPNRGDTGPISSHPNSAGGYPRGYSANDMQQYGDAVAGQASGEASKHGNTGNTPNNSTQNILANARMVPPTNSQALQMSQGLLSGVSMPMQPQQLDPQQSALLSSHSQQKNQQSMFTQQQHPQMQRPSMILPTNPLSAINSMSQSSGMQPGGQMANKYSPLQLQMLQQQQQAAVQKKIMMGLGSGVGMGMGMGMGMGMGSMGNSIAGLGALGNQLNMAGRGMGGTGISSSMSVPGIGNMGQNPMNLNPASNLNAISQQLRSGALTPQQNALFTQIRMGMANRGGVMGAPQTGISGVSGTRQMHPSSAGLSMLDQNRANLQRAAAMGNMGPPKLMPGMMNLYMNQQQQQQQLQQQPQQQQLQHQQQLQQPMSQPSQQLAQSPQQQQQLQQHEQPQQAQQQQQATASPLQSVLSPPQVGSPSAGITQQQLQQSSPQQMSQRTPMSPQQVNQRTPMSPQISSGAMHPMSTSNLEGCPASPQLSSQTMGSVGSITNSPMELQGPKNNSAGNNS.

Composition is skewed to polar residues over residues 313-331 (IGST…SVSG) and 504-515 (NFPQTSWNVNPG). Disordered regions lie at residues 313-371 (IGST…MPGL), 462-558 (EPFE…EFSG), 593-616 (ANEA…NSLP), 852-875 (VAGQ…NSTQ), and 1160-1325 (QQQQ…GNNS). The span at 518-529 (IEKEPKKEEQFS) shows a compositional bias: basic and acidic residues. Residues 596–607 (AMQQRQHQAQMA) are compositionally biased toward low complexity. The segment covering 863–875 (HGNTGNTPNNSTQ) has biased composition (polar residues). A compositionally biased stretch (low complexity) spans 1160 to 1224 (QQQQQQQLQQ…QQQATASPLQ (65 aa)). A compositionally biased stretch (polar residues) spans 1225–1239 (SVLSPPQVGSPSAGI). Residues 1240–1262 (TQQQLQQSSPQQMSQRTPMSPQQ) are compositionally biased toward low complexity. Polar residues-rich tracts occupy residues 1263–1286 (VNQR…TSNL) and 1293–1325 (PQLS…GNNS).

Component of a red light-dependent nuclear complex made of PHL, PHYB and CO. Interacts directly with PHYB and CO; CO binding requires the presence of PHYB. As to expression, mostly expressed in cotyledons and leaves, both in mesophyll and vasculature cells. Also present in roots, hypocotyls and shoot apices.

It localises to the nucleus. It is found in the nuclear body. The protein resides in the cytoplasmic granule. The protein localises to the cytoplasm. Triggers photoperiod-monitored flowering by repressing PHYB-dependent flowering negative regulation, probably through physical interactions with PHYB and CO. The polypeptide is Protein PHYTOCHROME-DEPENDENT LATE-FLOWERING (Arabidopsis thaliana (Mouse-ear cress)).